A 132-amino-acid chain; its full sequence is Putative holo-[acyl-carrier-protein] synthase (132 aa).

2 residues coordinate Mg(2+): aspartate 6 and glutamate 67.

The protein belongs to the P-Pant transferase superfamily. AcpS family.

The enzyme catalyses apo-[ACP] + CoA = holo-[ACP] + adenosine 3',5'-bisphosphate + H(+). Functionally, transfers the 4'-phosphopantetheine moiety from coenzyme A to a Ser of acyl-carrier-protein. The chain is Putative holo-[acyl-carrier-protein] synthase (new8) from Schizosaccharomyces pombe (strain 972 / ATCC 24843) (Fission yeast).